The following is a 251-amino-acid chain: MAEITAQQVKELREKTGAGMMDCKRALTENAGDITKAIEWLRQKGITSAEKKASRVAAEGMIGSYIHTGSRIGVLVEVNCETDFVARREEFKKLVNDVAMQIAACPNVEYVKVADIPAEIAAKEKEIEMGRDDLANKPDNIKEKIVAGRIEKRLKELSLLDQPFIRDQNISIDELLKQAIAALGENIQVRRFQRFVLGEGIEKEETDFAAEVAAQMGQKAPEPVAAAPQVEEKAPEPAAKDNPPAKGKKKK.

The tract at residues 82 to 85 (TDFV) is involved in Mg(2+) ion dislocation from EF-Tu. A disordered region spans residues 215–251 (QMGQKAPEPVAAAPQVEEKAPEPAAKDNPPAKGKKKK). A compositionally biased stretch (low complexity) spans 219-229 (KAPEPVAAAPQ). Residues 230-239 (VEEKAPEPAA) show a composition bias toward basic and acidic residues.

Belongs to the EF-Ts family.

Its subcellular location is the cytoplasm. Associates with the EF-Tu.GDP complex and induces the exchange of GDP to GTP. It remains bound to the aminoacyl-tRNA.EF-Tu.GTP complex up to the GTP hydrolysis stage on the ribosome. The chain is Elongation factor Ts from Microcystis aeruginosa (strain NIES-843 / IAM M-2473).